A 236-amino-acid polypeptide reads, in one-letter code: Uridylate kinase (236 aa).

11-14 (KFSG) contacts ATP. Gly-53 is a binding site for UMP. ATP contacts are provided by Gly-54 and Arg-58. UMP contacts are provided by residues Asp-73 and 134-141 (TGSPFFTT). The ATP site is built by Thr-161, Tyr-167, and Asp-170.

Belongs to the UMP kinase family. Homohexamer.

It localises to the cytoplasm. The catalysed reaction is UMP + ATP = UDP + ADP. It participates in pyrimidine metabolism; CTP biosynthesis via de novo pathway; UDP from UMP (UMPK route): step 1/1. With respect to regulation, inhibited by UTP. Catalyzes the reversible phosphorylation of UMP to UDP. The protein is Uridylate kinase of Hydrogenovibrio crunogenus (strain DSM 25203 / XCL-2) (Thiomicrospira crunogena).